A 250-amino-acid polypeptide reads, in one-letter code: 26 kDa periplasmic immunogenic protein (250 aa).

Positions 1 to 28 (MNTRASNFLAASFSTIMLVGAFSLPAFA) are cleaved as a signal peptide.

Its subcellular location is the periplasm. The chain is 26 kDa periplasmic immunogenic protein (bp26) from Brucella melitensis biotype 1 (strain ATCC 23456 / CCUG 17765 / NCTC 10094 / 16M).